The chain runs to 881 residues: Ribonucleoside-diphosphate reductase large subunit (881 aa).

The 92-residue stretch at 69 to 160 (TIYLDHNGSI…MTNLHDNTSD (92 aa)) folds into the ATP-cone domain. Substrate is bound by residues threonine 271, 286–287 (SC), glycine 315, 493–497 (NLCCE), and 675–679 (PTAST). Cysteine 287 and cysteine 510 form a disulfide bridge. Asparagine 493 serves as the catalytic Proton acceptor. The active-site Cysteine radical intermediate is cysteine 495. The Proton acceptor role is filled by glutamate 497.

It belongs to the ribonucleoside diphosphate reductase large chain family. As to quaternary structure, heterotetramer composed of a homodimer of the large subunit (R1) and a homodimer of the small subunit (R2). Larger multisubunit protein complex are also active, composed of (R1)n(R2)n.

It catalyses the reaction a 2'-deoxyribonucleoside 5'-diphosphate + [thioredoxin]-disulfide + H2O = a ribonucleoside 5'-diphosphate + [thioredoxin]-dithiol. Under complex allosteric control mediated by deoxynucleoside triphosphates and ATP binding. The type of nucleotide bound at the specificity site determines substrate preference. It seems probable that ATP makes the enzyme reduce CDP and UDP, dGTP favors ADP reduction and dTTP favors GDP reduction. Ribonucleoside-diphosphate reductase holoenzyme provides the precursors necessary for viral DNA synthesis. Allows virus growth in non-dividing cells. Catalyzes the biosynthesis of deoxyribonucleotides from the corresponding ribonucleotides. This chain is Ribonucleoside-diphosphate reductase large subunit (RNR1), found in Acanthamoeba polyphaga mimivirus (APMV).